The following is a 175-amino-acid chain: 2-oxo-4-hydroxy-4-carboxy-5-ureidoimidazoline decarboxylase (175 aa).

The active-site Proton donor is the H67. Substrate contacts are provided by residues P68, 84 to 88, and 119 to 123; these read SRGEQ and FVICA. A Microbody targeting signal motif is present at residues 173 to 175; sequence TKL.

Belongs to the OHCU decarboxylase family. As to quaternary structure, homodimer.

The protein localises to the peroxisome. It catalyses the reaction 5-hydroxy-2-oxo-4-ureido-2,5-dihydro-1H-imidazole-5-carboxylate + H(+) = (S)-allantoin + CO2. It participates in purine metabolism; urate degradation; (S)-allantoin from urate: step 3/3. In terms of biological role, catalyzes the stereoselective decarboxylation of 2-oxo-4-hydroxy-4-carboxy-5-ureidoimidazoline (OHCU) to (S)-allantoin. This chain is 2-oxo-4-hydroxy-4-carboxy-5-ureidoimidazoline decarboxylase (urad), found in Amia calva (Bowfin).